The following is a 630-amino-acid chain: Chaperone protein HtpG (630 aa).

Residues 1–338 (MTVEANKETL…SNDLSLNVSR (338 aa)) are a; substrate-binding. The tract at residues 339 to 555 (EILQNDSTVE…QFDMGAQMKK (217 aa)) is b. Positions 556–630 (IMEAAGQKVP…LNRLLLELAN (75 aa)) are c.

The protein belongs to the heat shock protein 90 family. Homodimer.

The protein resides in the cytoplasm. In terms of biological role, molecular chaperone. Has ATPase activity. This chain is Chaperone protein HtpG, found in Marinobacter nauticus (strain ATCC 700491 / DSM 11845 / VT8) (Marinobacter aquaeolei).